A 50-amino-acid chain; its full sequence is HIRNHFGSKPFKCNKCSYSCVNKSMLNSHLKSHSNVYQYRCADCAYATKY.

C2H2-type zinc fingers lie at residues 1–5 (HIRNH), 11–33 (FKCNKCSYSCVNKSMLNSHLKSH), and 39–50 (YRCADCAYATKY).

Belongs to the hunchback C2H2-type zinc-finger protein family.

The protein resides in the nucleus. In terms of biological role, gap class segmentation protein that controls development of head structures. The protein is Protein hunchback (hb) of Schultesia lampyridiformis (Firefly mimic roach).